Reading from the N-terminus, the 102-residue chain is Small ribosomal subunit protein uS10 (102 aa).

It belongs to the universal ribosomal protein uS10 family. Part of the 30S ribosomal subunit.

In terms of biological role, involved in the binding of tRNA to the ribosomes. This is Small ribosomal subunit protein uS10 from Thermobifida fusca (strain YX).